The following is a 317-amino-acid chain: MTTALDQLKQYTTVVADTGDFQQLAQYKPQDATTNPSLILKAVQKDAYKPILEKTVRDHRDESADFIIDRLLIAFGTEILKLIPGRVSTEVDARLSFDTPRSIDKGRELIKLYEDAGIGRERILIKLASTWEGIRAAEVLQKEGIKCNMTLLFSLVQAAASAEAGAQLISPFVGRIYDWYKKQAGADWDEAKNGGANDPGVQSVRRIYTYYKTFGYNTEVMGASFRTTSQITELAGCDLLTISPDLLQKLQDSNDTVERKLSPDALHDKPTERVAIDEASFRFQLNDEAMATEKLAEGIRVFAADAVKLEKLIDSLR.

The active-site Schiff-base intermediate with substrate is Lys126.

It belongs to the transaldolase family. Type 1 subfamily. In terms of assembly, homodimer.

The protein resides in the cytoplasm. It carries out the reaction D-sedoheptulose 7-phosphate + D-glyceraldehyde 3-phosphate = D-erythrose 4-phosphate + beta-D-fructose 6-phosphate. Its pathway is carbohydrate degradation; pentose phosphate pathway; D-glyceraldehyde 3-phosphate and beta-D-fructose 6-phosphate from D-ribose 5-phosphate and D-xylulose 5-phosphate (non-oxidative stage): step 2/3. Functionally, transaldolase is important for the balance of metabolites in the pentose-phosphate pathway. This is Transaldolase from Burkholderia ambifaria (strain ATCC BAA-244 / DSM 16087 / CCUG 44356 / LMG 19182 / AMMD) (Burkholderia cepacia (strain AMMD)).